The chain runs to 493 residues: Cytochrome P450 2E1 (493 aa).

Substrate is bound at residue 298 to 303; that stretch reads FAGTET. Residue cysteine 437 coordinates heme.

The protein belongs to the cytochrome P450 family. In terms of assembly, interacts with chaperones HSP70 and HSP90; this interaction is required for initial targeting to mitochondria. Heme is required as a cofactor.

The protein resides in the endoplasmic reticulum membrane. Its subcellular location is the microsome membrane. The protein localises to the mitochondrion inner membrane. It catalyses the reaction an organic molecule + reduced [NADPH--hemoprotein reductase] + O2 = an alcohol + oxidized [NADPH--hemoprotein reductase] + H2O + H(+). The enzyme catalyses (5Z,8Z,11Z)-eicosatrienoate + reduced [NADPH--hemoprotein reductase] + O2 = 19-hydroxy-(5Z,8Z,11Z)-eicosatrienoate + oxidized [NADPH--hemoprotein reductase] + H2O + H(+). The catalysed reaction is (5Z,8Z,11Z,14Z,17Z)-eicosapentaenoate + reduced [NADPH--hemoprotein reductase] + O2 = 19-hydroxy-(5Z,8Z,11Z,14Z,17Z)-eicosapentaenoate + oxidized [NADPH--hemoprotein reductase] + H2O + H(+). It carries out the reaction (4Z,7Z,10Z,13Z,16Z,19Z)-docosahexaenoate + reduced [NADPH--hemoprotein reductase] + O2 = 21-hydroxy-(4Z,7Z,10Z,13Z,16Z,19Z)-docosahexaenoate + oxidized [NADPH--hemoprotein reductase] + H2O + H(+). It catalyses the reaction dodecanoate + reduced [NADPH--hemoprotein reductase] + O2 = 11-hydroxydodecanoate + oxidized [NADPH--hemoprotein reductase] + H2O + H(+). The enzyme catalyses tetradecanoate + reduced [NADPH--hemoprotein reductase] + O2 = 13-hydroxytetradecanoate + oxidized [NADPH--hemoprotein reductase] + H2O + H(+). The catalysed reaction is 4-nitrophenol + NADPH + O2 + H(+) = 4-nitrocatechol + NADP(+) + H2O. The protein operates within lipid metabolism; fatty acid metabolism. The omega-1 hydroxylase activity is stimulated by cytochrome b5. Its function is as follows. A cytochrome P450 monooxygenase involved in the metabolism of fatty acids. Mechanistically, uses molecular oxygen inserting one oxygen atom into a substrate, and reducing the second into a water molecule, with two electrons provided by NADPH via cytochrome P450 reductase (NADPH--hemoprotein reductase). Catalyzes the hydroxylation of carbon-hydrogen bonds. Hydroxylates fatty acids specifically at the omega-1 position displaying the highest catalytic activity for saturated fatty acids. May be involved in the oxidative metabolism of xenobiotics. This is Cytochrome P450 2E1 (CYP2E1) from Mesocricetus auratus (Golden hamster).